The chain runs to 412 residues: Esterase EstD (412 aa).

The N-terminal stretch at Met-1–Asp-20 is a signal peptide. Ser-243 acts as the Nucleophile in catalysis. Active-site charge relay system residues include Asp-347 and His-378.

This sequence belongs to the AB hydrolase superfamily. Esterase 10 family. Exists mainly as a monomer and, to some extent as a dimer.

It catalyses the reaction a carboxylic ester + H2O = an alcohol + a carboxylate + H(+). Its activity is regulated as follows. Is strongly inhibited by phenylmethylsulfonyl fluoride, a serine protease inhibitor, and by mercury chloride. Diethyl pyrocarbonate, a histidine modifier, also inhibits the reaction, albeit less pronounced than phenylmethylsulfonyl fluoride. EDTA and dithiothreitol have no effect on enzyme activity. In terms of biological role, exhibits significant esterase activity with a preference for short acyl chain esters (C4-C8) in vitro. Its physiological function is not known. Displays neither proteolytic activity using casein as substrate, nor peptidase activity when assayed with L-leucine p-nitroanilide and L-proline p-nitroanilide. The protein is Esterase EstD of Thermotoga maritima (strain ATCC 43589 / DSM 3109 / JCM 10099 / NBRC 100826 / MSB8).